Here is a 309-residue protein sequence, read N- to C-terminus: Porphobilinogen deaminase (309 aa).

Cys241 bears the S-(dipyrrolylmethanemethyl)cysteine mark.

This sequence belongs to the HMBS family. In terms of assembly, monomer. Dipyrromethane is required as a cofactor.

It catalyses the reaction 4 porphobilinogen + H2O = hydroxymethylbilane + 4 NH4(+). Its pathway is porphyrin-containing compound metabolism; protoporphyrin-IX biosynthesis; coproporphyrinogen-III from 5-aminolevulinate: step 2/4. In terms of biological role, tetrapolymerization of the monopyrrole PBG into the hydroxymethylbilane pre-uroporphyrinogen in several discrete steps. The protein is Porphobilinogen deaminase of Bacillus cereus (strain ATCC 10987 / NRS 248).